A 180-amino-acid chain; its full sequence is DNA-directed RNA polymerase subunit Rpo7 (180 aa).

An S1 motif domain is found at 82 to 165 (QEVVEGEVLQ…RLPRIALTMR (84 aa)).

The protein belongs to the eukaryotic RPB7/RPC8 RNA polymerase subunit family. As to quaternary structure, part of the 13-subunit RNA polymerase complex. Forms a stalk with Rpo4 that extends from the main structure.

It localises to the cytoplasm. It catalyses the reaction RNA(n) + a ribonucleoside 5'-triphosphate = RNA(n+1) + diphosphate. In terms of biological role, DNA-dependent RNA polymerase (RNAP) catalyzes the transcription of DNA into RNA using the four ribonucleoside triphosphates as substrates. The highly mobile Rpo4/Rpo7 heterodimer is conditionally required for transcription initiation. The sequence is that of DNA-directed RNA polymerase subunit Rpo7 from Saccharolobus shibatae (strain ATCC 51178 / DSM 5389 / JCM 8931 / NBRC 15437 / B12) (Sulfolobus shibatae).